Consider the following 380-residue polypeptide: Carbamoyl phosphate synthase small chain (380 aa).

The segment at 1 to 184 (MTTSTRGAHR…EAYVVPAIGE (184 aa)) is CPSase. Residues Ser-55, Gly-236, and Gly-238 each contribute to the L-glutamine site. The 193-residue stretch at 188–380 (TVAAVDLGIK…FVNLMEGQRA (193 aa)) folds into the Glutamine amidotransferase type-1 domain. Cys-264 acts as the Nucleophile in catalysis. Positions 265, 268, 306, 308, and 309 each coordinate L-glutamine. Residues His-354 and Glu-356 contribute to the active site.

The protein belongs to the CarA family. As to quaternary structure, composed of two chains; the small (or glutamine) chain promotes the hydrolysis of glutamine to ammonia, which is used by the large (or ammonia) chain to synthesize carbamoyl phosphate. Tetramer of heterodimers (alpha,beta)4.

The catalysed reaction is hydrogencarbonate + L-glutamine + 2 ATP + H2O = carbamoyl phosphate + L-glutamate + 2 ADP + phosphate + 2 H(+). The enzyme catalyses L-glutamine + H2O = L-glutamate + NH4(+). It participates in amino-acid biosynthesis; L-arginine biosynthesis; carbamoyl phosphate from bicarbonate: step 1/1. The protein operates within pyrimidine metabolism; UMP biosynthesis via de novo pathway; (S)-dihydroorotate from bicarbonate: step 1/3. Functionally, small subunit of the glutamine-dependent carbamoyl phosphate synthetase (CPSase). CPSase catalyzes the formation of carbamoyl phosphate from the ammonia moiety of glutamine, carbonate, and phosphate donated by ATP, constituting the first step of 2 biosynthetic pathways, one leading to arginine and/or urea and the other to pyrimidine nucleotides. The small subunit (glutamine amidotransferase) binds and cleaves glutamine to supply the large subunit with the substrate ammonia. The sequence is that of Carbamoyl phosphate synthase small chain from Streptomyces coelicolor (strain ATCC BAA-471 / A3(2) / M145).